The chain runs to 593 residues: PiggyBac transposable element-derived protein 3 (593 aa).

Disordered stretches follow at residues Ile27–Leu53 and Ser69–Arg105. Residues Ser38–Gly47 are compositionally biased toward acidic residues. Ser86 is subject to Phosphoserine.

As to expression, expressed in heart and oocytes, but not in granulosa cells (at protein level).

It localises to the nucleus. Its function is as follows. Binds in vitro to PGBD3-related transposable elements, called MER85s; these non-autonomous 140 bp elements are characterized by the presence of PGBD3 terminal inverted repeats and the absence of internal transposase ORF. The chain is PiggyBac transposable element-derived protein 3 (PGBD3) from Homo sapiens (Human).